The chain runs to 352 residues: NADH-ubiquinone oxidoreductase chain 2 (352 aa).

The next 11 helical transmembrane spans lie at 4–24 (MISIFLFLTVVSGTIIVVSAE), 26–46 (WFVIWLGLELSTLALIPILWF), 60–80 (FLVQAFSAALLLNSALIQAWF), 96–116 (LCLSVALAFNLGLAACHFWLP), 124–144 (FIQGLIIATWQKIAPLFLLFY), 150–170 (FSYFIILAALISILVGGWGGL), 178–198 (ILAFSSIGNMGWIVVTSAFSL), 205–225 (LFIYLVINTSIFLILDFLSIF), 241–261 (ITLVILTILSLGGLPPLTGFI), 274–294 (GFIFFSSVMIIGSLLSLFFYL), and 330–350 (LVSSFSVLSILAIPLTIPLYI).

Belongs to the complex I subunit 2 family.

It localises to the mitochondrion inner membrane. The catalysed reaction is a ubiquinone + NADH + 5 H(+)(in) = a ubiquinol + NAD(+) + 4 H(+)(out). In terms of biological role, core subunit of the mitochondrial membrane respiratory chain NADH dehydrogenase (Complex I) that is believed to belong to the minimal assembly required for catalysis. Complex I functions in the transfer of electrons from NADH to the respiratory chain. The immediate electron acceptor for the enzyme is believed to be ubiquinone. The chain is NADH-ubiquinone oxidoreductase chain 2 (ND2) from Paracentrotus lividus (Common sea urchin).